The following is a 1493-amino-acid chain: MPSSPYGANASTSHQHVKQNAHPSAPLSRTSPSLPPKPTVAMNGNGHYHAAPTSVALDKNKQTATSSHNLMIGVPPAATPNLSLAQSRPPDSKQSSDADGHPVFLSSAKGKQKQVDPIHIPLAQLEQELPLEEADLISLAALVERLANFGYEALQNLAETLPSLPSSSKRAKIFNTALNVRKQFIKLLVLARWSKDISDLQKSRNIIALLSEQQWQHEDVFAGLTDIRKILPNARMRNADLPTAIDVLHTGTYRRLPASIKQMAVAPKPFTDQQALLIVSRLEDALRTRMACRELVPAPLSNYTIHDGKVHFHVPGLFQAQLTASGSAQHELTPSSSDDRWWLLDLTFDVIASGSCAASCNRAFPRKPKRAYRERLRVWGDQQLSPVIQSDGVDESNARPLDIAADKTEQGTDVQIAPEKPTDAPTVNEANPAITATHHDDSLMPTAPVQRDAPLSRLFAFLQERALHYQMDILQHQAYELCRLNWGSNLRIETAERPRNLTVHYWTQAQGAAGATQRVESAAAGGSVQITIVDLPDTPGATETLAALFDGDDDQSSTTHDTASLTTVKRRGLQVTWDADRSILADAQSNNLAISPHSLDIEALLSSVIKQHTLALLRNLQRRILVSDHALSRLLRPEDCTLCLEHIQRQGDEFSTATETTTFNFLQIDLHASQRPRTAKSKPNPKPEQRSASCLAPLRLSVDPVTGRLLLDSEPAQSTTDLSSEQTSQQAASFTASILTTRPNYARLAEASDRINESIDALLDVLYRLDVFARVQEWERMASYLGLRSVRKLALRPQDLAKLGASTLASAEAAPQLFLPLRQSFGGYFLALQPSELAGVSIALVYVVQVMDPTGTPALSVQSIEWLDRAKIAAAASKVGSSGEDVGQEFVATEAGTKRKAPPGVQGETNDVDANFGSSELTIEELADVHSYCIALVSYFRVEQQLRMRGLPYLHVGSNTMRSSPPCKRQRRQQTADARDDGLFGEDASGGTASSDDEAFAGPAGVAGVAALVPSLCLRSIDVLGPSKSHLAKPNISLRVRHWDDDEKLCVEMRIKLRMKSRQFRTLHEVVALAASSDQQSTCALTWIDFDREASLLTLTTRDLDNCMSIFHTHWERVMRMVQLTREVLNASRAWQQRALRLRRSCKKPGERVELCRFELDSVVFSYGSIKVDGLEAKLLVRVRWQDAKLEMQAFSPIGVTQSGGYILEFGSMRSVQVEALDQDAQLREDGVSRWFDETHCLANPHKVMALELRRTVNVAARSAAMHAMLQPQAERIVWRGFLELLQHTLPLVREMAPLVDKCLTHAHVPEVEIKSATWFRFRFQDRYAIDVRLATRSRLVVSDASRALFASEVRTSESESESETTDAVPLDAVFGGSQLLNDLLDATTLARKCSKPKTRIAAQLSSAQFGPIPNIEHVLRSVHAKLDAITWIDARDHRSSAARLRVYELGRALLISLPSASHPNAQAAYHAIAHLVPLLIDRVEAQLARSTP.

Disordered regions lie at residues 1–51 (MPSS…YHAA), 71–110 (MIGVPPAATPNLSLAQSRPPDSKQSSDADGHPVFLSSAKG), 408–427 (TEQGTDVQIAPEKPTDAPTV), 674–693 (QRPRTAKSKPNPKPEQRSAS), 894–913 (EAGTKRKAPPGVQGETNDVD), and 957–997 (GSNT…SSDD). Basic and acidic residues predominate over residues 90 to 100 (PDSKQSSDADG).

It belongs to the Mediator complex subunit 14 family. As to quaternary structure, component of the Mediator complex.

It is found in the nucleus. Its function is as follows. Component of the Mediator complex, a coactivator involved in the regulated transcription of nearly all RNA polymerase II-dependent genes. Mediator functions as a bridge to convey information from gene-specific regulatory proteins to the basal RNA polymerase II transcription machinery. Mediator is recruited to promoters by direct interactions with regulatory proteins and serves as a scaffold for the assembly of a functional preinitiation complex with RNA polymerase II and the general transcription factors. This is Mediator of RNA polymerase II transcription subunit 14 (RGR1) from Mycosarcoma maydis (Corn smut fungus).